We begin with the raw amino-acid sequence, 152 residues long: Endoribonuclease YbeY (152 aa).

Residues H117, H121, and H127 each contribute to the Zn(2+) site.

It belongs to the endoribonuclease YbeY family. The cofactor is Zn(2+).

The protein resides in the cytoplasm. Its function is as follows. Single strand-specific metallo-endoribonuclease involved in late-stage 70S ribosome quality control and in maturation of the 3' terminus of the 16S rRNA. The sequence is that of Endoribonuclease YbeY from Borreliella afzelii (strain PKo) (Borrelia afzelii).